Here is a 347-residue protein sequence, read N- to C-terminus: GMP reductase (347 aa).

108 to 131 (ADFDKMKQILALSPALKFICIDVA) is a binding site for NADP(+). Gly-181 and Gly-183 together coordinate K(+). The active-site Thioimidate intermediate is the Cys-186. Residue 216-239 (IVSDGGCSVPGDVAKAFGGGADFV) participates in NADP(+) binding.

This sequence belongs to the IMPDH/GMPR family. GuaC type 1 subfamily. Homotetramer.

The catalysed reaction is IMP + NH4(+) + NADP(+) = GMP + NADPH + 2 H(+). Its function is as follows. Catalyzes the irreversible NADPH-dependent deamination of GMP to IMP. It functions in the conversion of nucleobase, nucleoside and nucleotide derivatives of G to A nucleotides, and in maintaining the intracellular balance of A and G nucleotides. This chain is GMP reductase, found in Yersinia enterocolitica serotype O:8 / biotype 1B (strain NCTC 13174 / 8081).